Consider the following 214-residue polypeptide: 3-demethoxyubiquinol 3-hydroxylase (214 aa).

Residues E63, E93, H96, E145, E177, and H180 each contribute to the Fe cation site.

It belongs to the COQ7 family. It depends on Fe cation as a cofactor.

The protein resides in the cell membrane. The catalysed reaction is a 5-methoxy-2-methyl-3-(all-trans-polyprenyl)benzene-1,4-diol + AH2 + O2 = a 3-demethylubiquinol + A + H2O. It functions in the pathway cofactor biosynthesis; ubiquinone biosynthesis. In terms of biological role, catalyzes the hydroxylation of 2-nonaprenyl-3-methyl-6-methoxy-1,4-benzoquinol during ubiquinone biosynthesis. The sequence is that of 3-demethoxyubiquinol 3-hydroxylase from Psychrobacter cryohalolentis (strain ATCC BAA-1226 / DSM 17306 / VKM B-2378 / K5).